The sequence spans 261 residues: tRNA pseudouridine synthase A (261 aa).

Aspartate 51 (nucleophile) is an active-site residue. Tyrosine 109 provides a ligand contact to substrate.

Belongs to the tRNA pseudouridine synthase TruA family. Homodimer.

It catalyses the reaction uridine(38/39/40) in tRNA = pseudouridine(38/39/40) in tRNA. Functionally, formation of pseudouridine at positions 38, 39 and 40 in the anticodon stem and loop of transfer RNAs. The chain is tRNA pseudouridine synthase A from Shewanella sediminis (strain HAW-EB3).